Here is a 24-residue protein sequence, read N- to C-terminus: MFHVLTLTYLCPLDVVXQTRPAHV.

This Mycolicibacterium smegmatis (Mycobacterium smegmatis) protein is 12 kDa protein.